The following is a 168-amino-acid chain: Group IIF secretory phospholipase A2 (168 aa).

An N-terminal signal peptide occupies residues 1-20; sequence MKKFFTVAILAGSVLSTAHG. Disulfide bonds link Cys46–Cys138, Cys48–Cys64, Cys63–Cys120, Cys69–Cys145, Cys70–Cys113, Cys79–Cys106, and Cys98–Cys111. The Ca(2+) site is built by Tyr47, Gly49, and Gly51. His67 is an active-site residue. Asp68 is a binding site for Ca(2+). Residues Asn92 and Asn102 are each glycosylated (N-linked (GlcNAc...) asparagine). The active site involves Asp114. N-linked (GlcNAc...) asparagine glycosylation is found at Asn123 and Asn144. The tract at residues 139–168 is required for localization on the plasma membrane; it reads QGPTPNCSIYEPPPEEVTCSHQSPAPPAPP.

The protein belongs to the phospholipase A2 family. The cofactor is Ca(2+). As to expression, expressed at high levels in placenta, testis, thymus and at lower levels in heart, kidney, liver and prostate. Highly expressed in rheumatoid arthritic tissues, including synovial lining cells in the intima, capillary endothelial cells and plasma cells.

Its subcellular location is the secreted. The protein localises to the cell membrane. The enzyme catalyses a 1,2-diacyl-sn-glycero-3-phosphocholine + H2O = a 1-acyl-sn-glycero-3-phosphocholine + a fatty acid + H(+). It carries out the reaction 1-hexadecanoyl-2-(9Z-octadecenoyl)-sn-glycero-3-phospho-(1'-sn-glycerol) + H2O = 1-hexadecanoyl-sn-glycero-3-phospho-(1'-sn-glycerol) + (9Z)-octadecenoate + H(+). The catalysed reaction is 1-hexadecanoyl-2-(9Z,12Z-octadecadienoyl)-sn-glycero-3-phosphoethanolamine + H2O = 1-hexadecanoyl-sn-glycero-3-phosphoethanolamine + (9Z,12Z)-octadecadienoate + H(+). It catalyses the reaction 1-hexadecanoyl-2-(5Z,8Z,11Z,14Z-eicosatetraenoyl)-sn-glycero-3-phosphoethanolamine + H2O = 1-hexadecanoyl-sn-glycero-3-phosphoethanolamine + (5Z,8Z,11Z,14Z)-eicosatetraenoate + H(+). The enzyme catalyses 1-hexadecanoyl-2-(9Z-octadecenoyl)-sn-glycero-3-phosphocholine + H2O = 1-hexadecanoyl-sn-glycero-3-phosphocholine + (9Z)-octadecenoate + H(+). It carries out the reaction 1-hexadecanoyl-2-(9Z-octadecenoyl)-sn-glycero-3-phospho-L-serine + H2O = 1-hexadecanoyl-sn-glycero-3-phospho-L-serine + (9Z)-octadecenoate + H(+). Its function is as follows. Secretory calcium-dependent phospholipase A2 that primarily targets extracellular phospholipids. Hydrolyzes the ester bond of the fatty acyl group attached at the sn-2 position of phospholipids (phospholipase A2 activity), the catalytic efficiency decreasing in the following order: phosphatidylglycerols &gt; phosphatidylethanolamines &gt; phosphatidylcholines &gt; phosphatidylserines. May play a role in lipid mediator production in inflammatory conditions, by providing arachidonic acid to downstream cyclooxygenases and lipoxygenases. The chain is Group IIF secretory phospholipase A2 (PLA2G2F) from Homo sapiens (Human).